A 442-amino-acid polypeptide reads, in one-letter code: MTAAVQSPVLPLLEKENVADIAIPEGDSTYWWRTSGQDLSRMLQEAGYPDEAKRQFLNYFRDTICPTLGGKPDSNALRTAVGWDGSPFEYSFEFKESTKSAGVRFVVDLTQLRPGDKSAPLTTKTTENVIESLSKKTPLFDDNWHRALSQWFVYSHAPESEQKALVAAAGYQTNIIMGFDINAKILDLAPGYLPIMAKSYFPPCFVAEAKGFTRWQALSLGIRQIPDIGSHPNILLALKLIEDYVAAKPELAGGARGLSTDFVKAGKARLKIYMRYLGDDFEEVWDYYTLGGKIPDLESDKEMFRDLMTLSSPSTYTEEDWKDTQVDPRRRAAFKTKPTAVYFSLSPDKPYPIPKVYFYPARAAPNDKVIARGLDAWLTKYNWHDGGKSVEERVESVFTHRKLEENPGIFTFIGLGRKEDSTKKGLSLQVYMTPELYVTPRF.

It belongs to the tryptophan dimethylallyltransferase family.

It participates in secondary metabolite biosynthesis; terpenoid biosynthesis. Its function is as follows. Prenyltransferase; part of the gene cluster that mediates the biosynthesis of the phthalide-terpenoid hybrid 11'-O-desmethylfendlerol. Within the pathway, mfmD is responsible for farnesylation of the cyclopolic acid intermediate via an O-prenylation reaction. The biosynthesis of 11'-O-desmethylfendlerol begins with the NR-PKS mfmB that forms 3,5-dimethylorsellinic acid (DMOA), which is then transformed into the phthalide 5,7-dihydroxy-4-(hydroxymethyl)-6-methylphthalide by the cytochrome P450 monooxygenase mfmA and the hydrolase mfmC. Subsequently, the methyltransferase mfmE catalyzes 7-O-methylation to yield 5-hydroxy-4-(hydroxymethyl)-7-methoxy-6-methylphthalide, which undergoes C-3 hydroxylation by the cytochrome P450 monooxygenase mfmF. The resultant cyclopolic acid (2,5-dihydroxy-4-(hydroxymethyl)-7-methoxy-6-methylphthalide) is then farnesylated by the DMATS-type prenyltransferase mfmD to afford 5-O-farnesylcyclopolic acid. Finally, the Pyr4-family terpene cyclase mfmH cyclizes the farnesyl moiety of 5-O-farnesylcyclopolic acid into a drimane-like structure, thus completing the biosynthesis of 11'-O-desmethylfendlerol. In Annulohypoxylon moriforme (Filamentous fungus), this protein is DMATS-type prenyltransferase mfmD.